The primary structure comprises 124 residues: Insulin-like growth factor 1 (124 aa).

Residues 1 to 19 constitute a propeptide that is removed on maturation; that stretch reads IHFFYLGLCLLTLTSSAAA. The b stretch occupies residues 20–48; sequence GPETLCGAELVDALQFVCGDRGFYFSKPT. 3 disulfides stabilise this stretch: C25–C67, C37–C80, and C66–C71. A c region spans residues 49–60; sequence GYGSSSRRLHHK. The interval 61-81 is a; the sequence is GIVDECCFQSCDLRRLEMYCA. Residues 82–89 form a d region; sequence PIKPPKSA. A disordered region spans residues 86–124; sequence PKSARSVRAQRHTDMPKAQKEVHLKNTSRGNTGNRNYRM. Residues 90 to 124 constitute a propeptide, e peptide; that stretch reads RSVRAQRHTDMPKAQKEVHLKNTSRGNTGNRNYRM. Residues 96–109 are compositionally biased toward basic and acidic residues; it reads RHTDMPKAQKEVHL. Over residues 110–124 the composition is skewed to polar residues; it reads KNTSRGNTGNRNYRM.

The protein belongs to the insulin family.

The protein localises to the secreted. Its function is as follows. The insulin-like growth factors, isolated from plasma, are structurally and functionally related to insulin but have a much higher growth-promoting activity. Acts as a ligand for IGF1R. Binds to the alpha subunit of IGF1R, leading to the activation of the intrinsic tyrosine kinase activity which autophosphorylates tyrosine residues in the beta subunit thus initiatiating a cascade of down-stream signaling events leading to activation of the PI3K-AKT/PKB and the Ras-MAPK pathways. Binds to integrins. Its binding to integrins and subsequent ternary complex formation with integrins and IGFR1 are essential for IGF1 signaling. The chain is Insulin-like growth factor 1 from Coturnix japonica (Japanese quail).